We begin with the raw amino-acid sequence, 390 residues long: Dual-specificity RNA methyltransferase RlmN (390 aa).

Glu-110 (proton acceptor) is an active-site residue. One can recognise a Radical SAM core domain in the interval Glu-116–Asp-355. Cys-123 and Cys-360 form a disulfide bridge. [4Fe-4S] cluster-binding residues include Cys-130, Cys-134, and Cys-137. S-adenosyl-L-methionine contacts are provided by residues Gly-184–Glu-185, Ser-216, Ser-238–His-240, and Asn-317. Catalysis depends on Cys-360, which acts as the S-methylcysteine intermediate.

Belongs to the radical SAM superfamily. RlmN family. [4Fe-4S] cluster serves as cofactor.

The protein localises to the cytoplasm. The catalysed reaction is adenosine(2503) in 23S rRNA + 2 reduced [2Fe-2S]-[ferredoxin] + 2 S-adenosyl-L-methionine = 2-methyladenosine(2503) in 23S rRNA + 5'-deoxyadenosine + L-methionine + 2 oxidized [2Fe-2S]-[ferredoxin] + S-adenosyl-L-homocysteine. It catalyses the reaction adenosine(37) in tRNA + 2 reduced [2Fe-2S]-[ferredoxin] + 2 S-adenosyl-L-methionine = 2-methyladenosine(37) in tRNA + 5'-deoxyadenosine + L-methionine + 2 oxidized [2Fe-2S]-[ferredoxin] + S-adenosyl-L-homocysteine. In terms of biological role, specifically methylates position 2 of adenine 2503 in 23S rRNA and position 2 of adenine 37 in tRNAs. m2A2503 modification seems to play a crucial role in the proofreading step occurring at the peptidyl transferase center and thus would serve to optimize ribosomal fidelity. This chain is Dual-specificity RNA methyltransferase RlmN, found in Haemophilus influenzae (strain 86-028NP).